The following is a 296-amino-acid chain: Arginase (296 aa).

Mn(2+)-binding residues include His-98, Asp-124, His-126, and Asp-128. L-arginine contacts are provided by Asn-130, Ser-137, and Asp-178. Positions 225 and 227 each coordinate Mn(2+). Residues Asp-227 and Thr-239 each contribute to the L-arginine site.

Belongs to the arginase family. As to quaternary structure, monomer. Homodimer; dimerization is dispensable for catalytic activity. It depends on Mn(2+) as a cofactor.

The catalysed reaction is L-arginine + H2O = urea + L-ornithine. It functions in the pathway nitrogen metabolism; urea cycle; L-ornithine and urea from L-arginine: step 1/1. Substitution of the loosely bound surface exposed Mn(2+) with Mg(2+), Zn(2+), Ni(2+) or Co(2+) results in similar catalytic activity, substitution with Cd(2+) and Cu(2+) reduces catalytic activity and substitution with Hg(2+) and Ca(2+) inhibits the enzyme. Inhibited by L-norvaline. Its function is as follows. Catalyzes the hydrolysis of L-arginine into urea and L-ornithine, which is a precursor for polyamine biosynthesis. By depleting host L-arginine, a substrate for nitric oxide synthase (NOS), prevents the production of nitric oxide (NO) by host activated macrophages, and thus allows the parasite to evade host immune response. This chain is Arginase, found in Entamoeba histolytica (strain ATCC 30459 / HM-1:IMSS / ABRM).